The following is a 467-amino-acid chain: Glutamate--tRNA ligase (467 aa).

Positions 9-19 (PSPTGFLHIGG) match the 'HIGH' region motif. A 'KMSKS' region motif is present at residues 250–254 (KLSKR). Residue Lys-253 coordinates ATP.

It belongs to the class-I aminoacyl-tRNA synthetase family. Glutamate--tRNA ligase type 1 subfamily. Monomer.

The protein resides in the cytoplasm. The catalysed reaction is tRNA(Glu) + L-glutamate + ATP = L-glutamyl-tRNA(Glu) + AMP + diphosphate. In terms of biological role, catalyzes the attachment of glutamate to tRNA(Glu) in a two-step reaction: glutamate is first activated by ATP to form Glu-AMP and then transferred to the acceptor end of tRNA(Glu). The sequence is that of Glutamate--tRNA ligase from Mesomycoplasma hyopneumoniae (strain J / ATCC 25934 / NCTC 10110) (Mycoplasma hyopneumoniae).